The primary structure comprises 323 residues: Aquaporin-4 (323 aa).

Topologically, residues 1 to 36 (MSDGAAARRWGKCGHSCSRESIMVAFKGVWTQAFWK) are cytoplasmic. Residues C13 and C17 are each lipidated (S-palmitoyl cysteine). The helical transmembrane segment at 37 to 57 (AVSAEFLATLIFVLLGVGSTI) threads the bilayer. Residues 58-69 (NWGGSENPLPVD) are Extracellular-facing. A helical membrane pass occupies residues 70–89 (MVLISLCFGLSIATMVQCFG). The Cytoplasmic segment spans residues 90–93 (HISG). Positions 94–101 (GHINPAVT) form an intramembrane region, discontinuously helical. Residues 97 to 99 (NPA) carry the NPA 1 motif. Residues 102–115 (VAMVCTRKISIAKS) lie on the Cytoplasmic side of the membrane. S111 is subject to Phosphoserine; by PKG. A helical transmembrane segment spans residues 116–136 (VFYIIAQCLGAIIGAGILYLV). Residues 137–155 (TPPSVVGGLGVTTVHGNLT) are Extracellular-facing. Residue N153 is glycosylated (N-linked (GlcNAc...) asparagine). Residues 156–176 (AGHGLLVELIITFQLVFTIFA) traverse the membrane as a helical segment. Residues 177–184 (SCDSKRTD) lie on the Cytoplasmic side of the membrane. S180 is subject to Phosphoserine; by PKC. The helical transmembrane segment at 185-205 (VTGSIALAIGFSVAIGHLFAI) threads the bilayer. The N-linked (GlcNAc...) asparagine glycan is linked to N206. At 206–208 (NYT) the chain is on the extracellular side. Positions 209 to 222 (GASMNPARSFGPAV) form an intramembrane region, discontinuously helical. Residues 213-215 (NPA) carry the NPA 2 motif. The Extracellular segment spans residues 223–231 (IMGNWANHW). A helical membrane pass occupies residues 232-252 (IYWVGPIMGAVLAGALYEYVF). At 253–323 (CPDVELKRRL…DSSGEVLSSV (71 aa)) the chain is on the cytoplasmic side. Phosphoserine occurs at positions 276 and 285. T289 carries the post-translational modification Phosphothreonine. Residue S321 is modified to Phosphoserine.

This sequence belongs to the MIP/aquaporin (TC 1.A.8) family. As to quaternary structure, homotetramer. The tetramers can form oligomeric arrays in membranes. The size of the oligomers differs between tissues and is smaller in skeletal muscle than in brain. Interaction between AQP4 oligomeric arrays in close-by cells can contribute to cell-cell adhesion. Part of a complex containing MLC1, TRPV4, HEPACAM and ATP1B1. Phosphorylation by PKC at Ser-180 reduces conductance by 50%. Phosphorylation by PKG at Ser-111 in response to glutamate increases conductance by 40%; this increase is not due to increased presence at the cell membrane. In terms of processing, isoform 2: Palmitoylated on its N-terminal region. Isoform 1: Not palmitoylated. As to expression, detected in brain cortex, especially around cortical blood vessels, and subjacent to pia, with lower levels in parenchymal membranes. Detected in ependymal and astroglial cells in brain. Detected in supporting Hensen's cells, inner sulcus cells and Claudius cells in the inner ear. Detected in skeletal muscle. Detected in gastric parietal cells. Detected in principal cells in collecting ducts in kidney medulla (at protein level). Detected in brain, heart and skeletal muscle.

The protein localises to the cell membrane. It localises to the basolateral cell membrane. It is found in the endosome membrane. Its subcellular location is the sarcolemma. The protein resides in the cell projection. It carries out the reaction H2O(in) = H2O(out). Forms a water-specific channel. Plays an important role in brain water homeostasis and in glymphatic solute transport. Required for a normal rate of water exchange across the blood brain interface. Required for normal levels of cerebrospinal fluid influx into the brain cortex and parenchyma along paravascular spaces that surround penetrating arteries, and for normal drainage of interstitial fluid along paravenous drainage pathways. Thereby, it is required for normal clearance of solutes from the brain interstitial fluid, including soluble beta-amyloid peptides derived from APP. Plays a redundant role in urinary water homeostasis and urinary concentrating ability. This chain is Aquaporin-4 (Aqp4), found in Mus musculus (Mouse).